We begin with the raw amino-acid sequence, 352 residues long: N-terminal EF-hand calcium-binding protein 1 (352 aa).

The residue at position 4 (Ser4) is a Phosphoserine. EF-hand domains are found at residues 26-61 (KGMSIFLDILRRADKNDDGKLSFEEFKAYFADGVLS) and 60-95 (LSGEELHELFHTIDTHNTNNLDTEELCEYFSQHLGE). Positions 39, 41, 43, 45, and 50 each coordinate Ca(2+). The stretch at 135 to 163 (LLKETLNQLQSLQNSLECAMETTEEQTRQ) forms a coiled coil. Residues 180 to 202 (GKRSSRRVQRHNSFSPNSPQFNV) are disordered. Over residues 190–202 (HNSFSPNSPQFNV) the composition is skewed to polar residues. Ser192 and Ser197 each carry phosphoserine. The stretch at 209–275 (EEDNQWMTQI…EEFQLALKHY (67 aa)) forms a coiled coil. In terms of domain architecture, ABM spans 252–340 (MLVQRQMSVI…LETPELTSTM (89 aa)).

As to quaternary structure, interacts with STX1. May interact with CPNE6.

It localises to the cytoplasm. The polypeptide is N-terminal EF-hand calcium-binding protein 1 (NECAB1) (Pongo abelii (Sumatran orangutan)).